The primary structure comprises 48 residues: uncharacterized protein (48 aa).

Residues 18–38 form a helical membrane-spanning segment; it reads IIIKYWYIDLTITIFAFLILY.

The protein resides in the host membrane. This is an uncharacterized protein from Acidianus bottle-shaped virus (isolate Italy/Pozzuoli) (ABV).